Reading from the N-terminus, the 606-residue chain is NADH-ubiquinone oxidoreductase chain 5 (606 aa).

The next 15 membrane-spanning stretches (helical) occupy residues 3–23, 38–58, 87–107, 124–144, 180–200, 216–236, 244–264, 276–296, 304–323, 328–350, 369–389, 404–424, 460–480, 483–503, and 586–606; these read VINLIPTLTLTSLIILTLPIT, ITKMAVTCAFAISLIPTLLFL, FFSLTFMPIALFITWSIMEFS, LLLFLITMLILVSANNLLQLF, IGDMGFIMMMAWFIIHLNSWE, LLGLLLASAGKSAQFGLHPWL, TPVSALLHSSTMVMAGVFTLI, IQTSTLCLGAITTLFTAICAL, IIALSTSSQLGLMMVTIGIN, AFTHMCTHAFFKAMLFLSSGSII, MPITSTAIIIGSLALTGMPFL, MSYINTWALLITLIAVSMTAS, LILGSIFMGFFISMNTIPHTT, MTMPPHLKFMALAVTLLGFTV, and LMKLYFLSFLLSITLGLLITL.

The protein belongs to the complex I subunit 5 family. In terms of assembly, core subunit of respiratory chain NADH dehydrogenase (Complex I) which is composed of 45 different subunits.

The protein localises to the mitochondrion inner membrane. The enzyme catalyses a ubiquinone + NADH + 5 H(+)(in) = a ubiquinol + NAD(+) + 4 H(+)(out). Functionally, core subunit of the mitochondrial membrane respiratory chain NADH dehydrogenase (Complex I) which catalyzes electron transfer from NADH through the respiratory chain, using ubiquinone as an electron acceptor. Essential for the catalytic activity and assembly of complex I. The sequence is that of NADH-ubiquinone oxidoreductase chain 5 (MT-ND5) from Elephas maximus (Indian elephant).